The chain runs to 90 residues: Acylphosphatase (90 aa).

The Acylphosphatase-like domain maps to 5–90 (CERFIVKGHV…YKPFRGFKIL (86 aa)). Residues R20 and N38 contribute to the active site.

It belongs to the acylphosphatase family.

It catalyses the reaction an acyl phosphate + H2O = a carboxylate + phosphate + H(+). This Vibrio parahaemolyticus serotype O3:K6 (strain RIMD 2210633) protein is Acylphosphatase (acyP).